The following is a 95-amino-acid chain: FXYD domain-containing ion transport regulator 6 (95 aa).

Residues 1–18 (MEVVLLFLCGLLAPAVLA) form the signal peptide. Residues 19-35 (SATEQEKEKDPFHYDYQ) lie on the Extracellular side of the membrane. The chain crosses the membrane as a helical span at residues 36–58 (TLRIGGLVFAVVLFSVGILLILS). The Cytoplasmic portion of the chain corresponds to 59 to 95 (RRCKCSFNQKPRAPGDEEAQVENLVTANATEPQKAEN). Positions 69–95 (PRAPGDEEAQVENLVTANATEPQKAEN) are disordered.

The protein belongs to the FXYD family. In terms of assembly, regulatory subunit of the sodium/potassium-transporting ATPase which is composed of a catalytic alpha subunit, a non-catalytic beta subunit and an additional regulatory subunit. The regulatory subunit, a member of the FXYD protein family, modulates the enzymatic activity in a tissue- and isoform-specific way by changing affinities of the Na+/K+-ATPase toward Na(+), K(+) or ATP.

The protein localises to the cell membrane. Functionally, associates with and regulates the activity of the sodium/potassium-transporting ATPase (NKA) which catalyzes the hydrolysis of ATP coupled with the exchange of Na(+) and K(+) ions across the plasma membrane. Reduces the apparent affinity for intracellular Na(+) with no change in the apparent affinity for extracellular K(+). In addition to modulating NKA kinetics, may also function as a regulator of NKA localization to the plasma membrane. This is FXYD domain-containing ion transport regulator 6 (FXYD6) from Bos taurus (Bovine).